The primary structure comprises 97 residues: Acylphosphatase (97 aa).

Positions 5-92 constitute an Acylphosphatase-like domain; that stretch reads RAHVWISGRV…GEFVRFEITF (88 aa). Active-site residues include Arg-20 and Asn-38.

Belongs to the acylphosphatase family.

It carries out the reaction an acyl phosphate + H2O = a carboxylate + phosphate + H(+). The protein is Acylphosphatase (acyP) of Syntrophobacter fumaroxidans (strain DSM 10017 / MPOB).